A 232-amino-acid chain; its full sequence is A-type ATP synthase subunit D (232 aa).

The protein belongs to the V-ATPase D subunit family. In terms of assembly, has multiple subunits with at least A(3), B(3), C, D, E, F, H, I and proteolipid K(x).

The protein resides in the cell membrane. Component of the A-type ATP synthase that produces ATP from ADP in the presence of a proton gradient across the membrane. The polypeptide is A-type ATP synthase subunit D (Methanopyrus kandleri (strain AV19 / DSM 6324 / JCM 9639 / NBRC 100938)).